Here is a 483-residue protein sequence, read N- to C-terminus: Proline--tRNA ligase (483 aa).

Belongs to the class-II aminoacyl-tRNA synthetase family. ProS type 3 subfamily. Homodimer.

The protein resides in the cytoplasm. The enzyme catalyses tRNA(Pro) + L-proline + ATP = L-prolyl-tRNA(Pro) + AMP + diphosphate. Catalyzes the attachment of proline to tRNA(Pro) in a two-step reaction: proline is first activated by ATP to form Pro-AMP and then transferred to the acceptor end of tRNA(Pro). The sequence is that of Proline--tRNA ligase from Mycoplasma genitalium (strain ATCC 33530 / DSM 19775 / NCTC 10195 / G37) (Mycoplasmoides genitalium).